We begin with the raw amino-acid sequence, 350 residues long: Thymidine kinase (350 aa).

ATP is bound at residue 17–24 (GPFGIGKT). Catalysis depends on Glu-45, which acts as the Proton acceptor. Residue Gln-86 participates in substrate binding. Arg-176 serves as a coordination point for ATP. A substrate-binding site is contributed by Arg-182.

It belongs to the herpesviridae thymidine kinase family. In terms of assembly, homodimer.

The catalysed reaction is thymidine + ATP = dTMP + ADP + H(+). Catalyzes the transfer of the gamma-phospho group of ATP to thymidine to generate dTMP in the salvage pathway of pyrimidine synthesis. The dTMP serves as a substrate for DNA polymerase during viral DNA replication. Allows the virus to be reactivated and to grow in non-proliferative cells lacking a high concentration of phosphorylated nucleic acid precursors. The sequence is that of Thymidine kinase from Gallus gallus (Chicken).